The following is a 224-amino-acid chain: uncharacterized protein (224 aa).

This is an uncharacterized protein from Listeria monocytogenes serovar 1/2a (strain ATCC BAA-679 / EGD-e).